Consider the following 410-residue polypeptide: MPHSTNKELIFGIMVGTAGISLLLLWYHKVRKPEKTMKLPKFLSLDNTFNSITLQDEVHNDQGTTVIFQERQLQILEKLNELLTNMEELKEEIRFLKETVPKLEEYIQDELGGKITVHKVSPQHRARKRRLPTIQSSATSNSSEEAESEGGYITANTDTEEQSFPVPKAFNTHVEELNLDVLLQKVDHLRMSESGKSESFELLCDHKEKFRDKIEFMWRFARAYGDMYELSTNTQEKKHYANIGRTLSERAINRAPMNGHCHLWYAVLCGYVSEFEGLQNKINYGHLFKEHLDIAIKLLPEEPFLYYLKGRYCYTVSKLSWIEKKMAATLFGKIPSSTVQEALHNFLKAEELCPGYSNPNYMYLAKCYADLEENQNALKFCNLALLLPTVTKEDKEAQKEMQKIMTSLKR.

A helical transmembrane segment spans residues 10–27; the sequence is IFGIMVGTAGISLLLLWY. At Ser51 the chain carries Phosphoserine. A coiled-coil region spans residues 68–110; it reads FQERQLQILEKLNELLTNMEELKEEIRFLKETVPKLEEYIQDE. Ser121 carries the phosphoserine modification. A compositionally biased stretch (basic residues) spans 122–131; it reads PQHRARKRRL. Residues 122-151 form a disordered region; that stretch reads PQHRARKRRLPTIQSSATSNSSEEAESEGG. Thr139 carries the post-translational modification Phosphothreonine. Tyr152 is modified (phosphotyrosine). A phosphothreonine mark is found at Thr154 and Thr157.

This sequence belongs to the RMDN family. As to quaternary structure, interacts with microtubules.

It is found in the membrane. It localises to the cytoplasm. The protein localises to the cytoskeleton. The protein resides in the spindle. Its subcellular location is the spindle pole. This Macaca fascicularis (Crab-eating macaque) protein is Regulator of microtubule dynamics protein 2 (RMDN2).